The primary structure comprises 133 residues: MSKLNKSIVAEFESAQITRELPKFSQGDTVVVNVKVKEGSRERVQAYEGVVIATKNAGLNSSFTVRKISHGYGVERVFQTHSAIIDSVEVKRRGKVRAGKLYYLRGLEGKAARIKEDLAAAAAAKAARLAEKA.

The protein belongs to the bacterial ribosomal protein bL19 family.

This protein is located at the 30S-50S ribosomal subunit interface and may play a role in the structure and function of the aminoacyl-tRNA binding site. The sequence is that of Large ribosomal subunit protein bL19 from Stenotrophomonas maltophilia (strain K279a).